The sequence spans 597 residues: Probable translation initiation factor IF-2 (597 aa).

Positions 4 to 221 (IRQPIIAVLG…LIAGLSQKYL (218 aa)) constitute a tr-type G domain. The tract at residues 13 to 20 (GHVDHGKT) is G1. 13–20 (GHVDHGKT) provides a ligand contact to GTP. The tract at residues 38–42 (GITQH) is G2. Positions 77–80 (DTPG) are G3. GTP contacts are provided by residues 77–81 (DTPGH) and 131–134 (NKID). The interval 131-134 (NKID) is G4. Residues 199-201 (SAK) form a G5 region.

Belongs to the TRAFAC class translation factor GTPase superfamily. Classic translation factor GTPase family. IF-2 subfamily.

Functionally, function in general translation initiation by promoting the binding of the formylmethionine-tRNA to ribosomes. Seems to function along with eIF-2. The sequence is that of Probable translation initiation factor IF-2 from Thermococcus onnurineus (strain NA1).